Here is a 485-residue protein sequence, read N- to C-terminus: Cysteine--tRNA ligase (485 aa).

C28 is a binding site for Zn(2+). Residues 30–40 (MTVYDLCHVGH) carry the 'HIGH' region motif. Zn(2+)-binding residues include C209, H234, and E238. Residues 266–270 (KMSKS) carry the 'KMSKS' region motif. K269 is a binding site for ATP.

This sequence belongs to the class-I aminoacyl-tRNA synthetase family. As to quaternary structure, monomer. Zn(2+) is required as a cofactor.

The protein localises to the cytoplasm. The enzyme catalyses tRNA(Cys) + L-cysteine + ATP = L-cysteinyl-tRNA(Cys) + AMP + diphosphate. This is Cysteine--tRNA ligase from Nitrosococcus oceani (strain ATCC 19707 / BCRC 17464 / JCM 30415 / NCIMB 11848 / C-107).